We begin with the raw amino-acid sequence, 162 residues long: NADH-quinone oxidoreductase subunit I (162 aa).

4Fe-4S ferredoxin-type domains lie at 53–83 and 93–122; these read LRRY…IEAE and TRYD…EGPN. [4Fe-4S] cluster contacts are provided by C63, C66, C69, C73, C102, C105, C108, and C112.

The protein belongs to the complex I 23 kDa subunit family. NDH-1 is composed of 14 different subunits. Subunits NuoA, H, J, K, L, M, N constitute the membrane sector of the complex. [4Fe-4S] cluster is required as a cofactor.

The protein resides in the cell inner membrane. The catalysed reaction is a quinone + NADH + 5 H(+)(in) = a quinol + NAD(+) + 4 H(+)(out). NDH-1 shuttles electrons from NADH, via FMN and iron-sulfur (Fe-S) centers, to quinones in the respiratory chain. The immediate electron acceptor for the enzyme in this species is believed to be ubiquinone. Couples the redox reaction to proton translocation (for every two electrons transferred, four hydrogen ions are translocated across the cytoplasmic membrane), and thus conserves the redox energy in a proton gradient. This chain is NADH-quinone oxidoreductase subunit I, found in Maricaulis maris (strain MCS10) (Caulobacter maris).